We begin with the raw amino-acid sequence, 576 residues long: Zinc finger protein 791 (576 aa).

The region spanning 4 to 90 (VAFKDVSVSF…AETFSPNLSV (87 aa)) is the KRAB domain. 17 consecutive C2H2-type zinc fingers follow at residues 100–122 (YECT…MRSH), 132–154 (YKCK…ERSH), 160–182 (YKCK…EQTH), 188–210 (YECK…ERIH), 216–238 (YECK…ERTH), 244–266 (YACK…MITH), 272–294 (YKCK…ERIH), 300–322 (YTCK…ERIH), 328–350 (YKCK…VRVH), 356–378 (YKCK…ERTH), 384–406 (YECK…KRNH), 412–434 (YECK…MITH), 440–462 (YKCR…ERTH), 468–490 (YECK…KRTH), 496–518 (YECK…MRMH), 524–546 (YKCK…TRIH), and 552–574 (LECK…MRMH).

The protein belongs to the krueppel C2H2-type zinc-finger protein family.

The protein resides in the nucleus. Its function is as follows. May be involved in transcriptional regulation. In Pongo abelii (Sumatran orangutan), this protein is Zinc finger protein 791 (ZNF791).